Reading from the N-terminus, the 311-residue chain is CD-NTase-associated protein 12 (311 aa).

Positions 4–121 (RIFIGSSKEG…LLGITVPQFE (118 aa)) constitute a TIR domain. The STING domain stretch occupies residues 157–311 (STVLAIGYFY…RNIVKIIQEE (155 aa)). 3',3'-c-di-GMP is bound by residues Phe-168, Pro-232, and Asp-249.

In the C-terminal section; belongs to the bacterial STING family. As to quaternary structure, forms homodimers; in the presence of c-di-GMP forms filaments with an ordered array of parallel-stacked subunits.

It catalyses the reaction NAD(+) + H2O = ADP-D-ribose + nicotinamide + H(+). With respect to regulation, NAD(+) hydrolase activity is strongly stimulated by c-di-GMP, weakly by 3'3'-cGAMP, very weakly by c-di-AMP but not at all by 2'3'-cGAMP. Self-association of TIR domains is required for NADase activity. Its function is as follows. Effector protein of a CBASS antiviral system with NAD(+) hydrolase activity. CBASS (cyclic oligonucleotide-based antiphage signaling system) provides immunity against bacteriophage. The CD-NTase protein synthesizes cyclic nucleotides in response to infection; these serve as specific second messenger signals. The signals activate a diverse range of effectors, leading to bacterial cell death and thus abortive phage infection. A type I-D CBASS(GG) system. In terms of biological role, binds c-di-GMP, does not bind cUMP-AMP. Upon activation by c-di-GMP forms filaments which hydrolyze NAD(+); filament formation is required for enzyme activation. This Flavobacterium daejeonense protein is CD-NTase-associated protein 12.